An 878-amino-acid chain; its full sequence is Alanine--tRNA ligase (878 aa).

Zn(2+) contacts are provided by His-566, His-570, Cys-668, and His-672. The segment at 846-866 (GGGRPDMAQAGGKQPEKLEEA) is disordered.

The protein belongs to the class-II aminoacyl-tRNA synthetase family. Zn(2+) serves as cofactor.

It localises to the cytoplasm. It catalyses the reaction tRNA(Ala) + L-alanine + ATP = L-alanyl-tRNA(Ala) + AMP + diphosphate. Catalyzes the attachment of alanine to tRNA(Ala) in a two-step reaction: alanine is first activated by ATP to form Ala-AMP and then transferred to the acceptor end of tRNA(Ala). Also edits incorrectly charged Ser-tRNA(Ala) and Gly-tRNA(Ala) via its editing domain. The polypeptide is Alanine--tRNA ligase (Bacillus pumilus (strain SAFR-032)).